A 422-amino-acid chain; its full sequence is Cyclin-A2 (422 aa).

An N-acetylmethionine modification is found at Met1. Residues 1 to 62 (MPGTSRHSGR…APQQKLKTRR (62 aa)) form a disordered region. A Phosphoserine modification is found at Ser5.

This sequence belongs to the cyclin family. Cyclin AB subfamily. Interacts with the CDK1 and CDK2 protein kinases to form serine/threonine kinase holoenzyme complexes. Interacts with CDK1 (hyperphosphorylated form in G1 and underphosphorylated forms in S and G2). Interacts with CDK2; the interaction increases from G1 to G2. Interacts (associated with CDK2 but not with CDK1) with SCAPER; regulates the activity of CCNA2/CDK2 by transiently maintaining CCNA2 in the cytoplasm. Forms a ternary complex with CDK2 and CDKN1B; CDKN1B inhibits the kinase activity of CDK2 through conformational rearrangements. Interacts with INCA1. As to quaternary structure, (Microbial infection) Interacts with mouse cytomegalovirus/MCMV kinase M97; this interaction sequesters CCNA2 to the cytoplasm. Post-translationally, polyubiquitinated via 'Lys-11'-linked ubiquitin by the anaphase-promoting complex (APC/C), leading to its degradation by the proteasome. Deubiquitinated and stabilized by USP37 enables entry into S phase. Ubiquitinated during the G1 phase by the SCF(FBXO31) complex, leading to its proteasomal degradation. Ubiquitous. In the testis, expressed in germ cells and in the ovary, in both germline and somatic cells.

The protein localises to the nucleus. It localises to the cytoplasm. Cyclin which controls both the G1/S and the G2/M transition phases of the cell cycle. Functions through the formation of specific serine/threonine kinase holoenzyme complexes with the cyclin-dependent protein kinases CDK1 and CDK2. The cyclin subunit confers the substrate specificity of these complexes and differentially interacts with and activates CDK1 and CDK2 throughout the cell cycle. The polypeptide is Cyclin-A2 (Mus musculus (Mouse)).